Here is a 2551-residue protein sequence, read N- to C-terminus: Piezo-type mechanosensitive ion channel component (2551 aa).

8 helical membrane passes run 5-25 (YACM…AALM), 27-47 (PVGI…VPLA), 56-76 (VTAF…GHIT), 106-126 (FIDL…LVFA), 204-226 (IHFE…FAAV), 231-250 (VPGG…WATC), 256-276 (GFAL…LSIV), and 320-340 (LSLD…ALAL). The interval 354-375 (STRKARTPQPLESGSSVAPSVT) is disordered. Polar residues predominate over residues 363–375 (PLESGSSVAPSVT). 9 helical membrane-spanning segments follow: residues 395–415 (TTTS…GFIY), 424–444 (ILMM…LLLS), 463–483 (PFIV…GMDL), 516–536 (VPLI…RQFF), 548–568 (LADF…SYLI), 588–608 (LLVR…AITG), 611–631 (MTGF…VFQS), 639–659 (IMYG…ILIY), and 695–715 (FLHL…VHYF). The span at 731 to 741 (GSAQQKPTETT) shows a compositional bias: polar residues. Positions 731-772 (GSAQQKPTETTALEPAPSKRRGSAGSLRKSQGPSAEAAPGAT) are disordered. 12 helical membrane passes run 819–839 (IAAF…FVGF), 857–877 (LISF…IEYL), 910–930 (LMSL…HAVI), 973–993 (LNFG…VSTI), 994–1014 (TYRQ…LLLL), 1022–1042 (IWGV…IVLV), 1071–1091 (GALH…LVIL), 1152–1172 (VLCG…TNIA), 1174–1194 (LLAL…SDFY), 1198–1218 (IHTI…NILI), 1239–1259 (WLVH…QIML), and 1275–1295 (ITHQ…IFQL). Disordered stretches follow at residues 1426–1521 (NITE…AKDS) and 1592–1658 (ESDE…PQQQ). The span at 1430 to 1448 (SEMKMQRRKTLYDKSKDAP) shows a compositional bias: basic and acidic residues. Residues 1466–1477 (ATASSSASPAPT) are compositionally biased toward low complexity. Over residues 1497-1511 (QTSKETSDSKSKMEV) the composition is skewed to basic and acidic residues. 2 stretches are compositionally biased toward low complexity: residues 1621–1634 (PTST…TTTP) and 1644–1658 (LQPL…PQQQ). The next 4 helical transmembrane spans lie at 1718–1738 (ISSW…VVFI), 1741–1761 (VVNA…WGTL), 1770–1790 (FWVT…IFQF), and 1817–1837 (AHYA…RYLL). The disordered stretch occupies residues 1854 to 1876 (FTKPTASIDERDDSDNLSQPDSR). The next 7 membrane-spanning stretches (helical) occupy residues 1937 to 1957 (ALMF…FTAF), 1979 to 1999 (IPFL…RALY), 2008 to 2028 (IIFH…VVPA), 2033 to 2053 (TFNS…YMLL), 2075 to 2095 (FSMV…LYEL), 2151 to 2171 (IMGG…LCLF), and 2431 to 2451 (TFSF…VLLA). The tract at residues 2522-2551 (EYVDDDGDTDSIPSRMSVRRPEQLQPQQPQ) is disordered.

It belongs to the PIEZO (TC 1.A.75) family.

Its subcellular location is the cell membrane. Functionally, component of a mechanosensitive channel required for rapidly adapting mechanically activated (MA) currents. Plays a major role in nociception (response to strong or painful touch). Required for maintaining the mechanosensitivity of tarsal bristle mechanosensors. During their evalulation of potential egg-laying sites, females determine the softest substrate for their eggs first by making a coarse evaluation of substrate hardness using mechanosensitive channels nan and Piezo in the leg tarsal bristles, followed by a much finer assessment using nan, iav and Tmc mechanosensitive channels on the labellum. Acts in the nompC- and nan-expressing neurons of the female leg tarsals, to sense the mild differences in egg-laying substrate stiffness. This Drosophila melanogaster (Fruit fly) protein is Piezo-type mechanosensitive ion channel component.